We begin with the raw amino-acid sequence, 193 residues long: Putative kinase protein 029R (193 aa).

Residue glycine 9–serine 17 participates in ATP binding. Substrate contacts are provided by glutamate 31, tyrosine 43, and glutamine 54. Glutamate 78 serves as the catalytic Proton acceptor. Substrate-binding residues include arginine 79 and glutamate 142.

It belongs to the DCK/DGK family.

This chain is Putative kinase protein 029R, found in Aedes vexans (Inland floodwater mosquito).